The primary structure comprises 131 residues: Leptin receptor gene-related protein (131 aa).

4 helical membrane passes run 7 to 27, 32 to 52, 69 to 89, and 100 to 120; these read LVAL…GCAL, VYWP…HFIA, LAYF…VILA, and GLVL…FLIF.

The protein belongs to the OB-RGRP/VPS55 family. As to quaternary structure, interacts with LEPR. Interacts with RAB13. In terms of tissue distribution, expressed at the highest levels in heart and placenta and at a lesser extent in lung, liver, skeletal muscle, kidney and pancreas.

It localises to the golgi apparatus membrane. The protein localises to the endosome membrane. In terms of biological role, negatively regulates leptin receptor (LEPR) cell surface expression, and thus decreases response to leptin. Negatively regulates growth hormone (GH) receptor cell surface expression in liver. May play a role in liver resistance to GH during periods of reduced nutrient availability. The polypeptide is Leptin receptor gene-related protein (LEPROT) (Homo sapiens (Human)).